The sequence spans 99 residues: Aspartyl/glutamyl-tRNA(Asn/Gln) amidotransferase subunit C (99 aa).

This sequence belongs to the GatC family. In terms of assembly, heterotrimer of A, B and C subunits.

The enzyme catalyses L-glutamyl-tRNA(Gln) + L-glutamine + ATP + H2O = L-glutaminyl-tRNA(Gln) + L-glutamate + ADP + phosphate + H(+). The catalysed reaction is L-aspartyl-tRNA(Asn) + L-glutamine + ATP + H2O = L-asparaginyl-tRNA(Asn) + L-glutamate + ADP + phosphate + 2 H(+). Functionally, allows the formation of correctly charged Asn-tRNA(Asn) or Gln-tRNA(Gln) through the transamidation of misacylated Asp-tRNA(Asn) or Glu-tRNA(Gln) in organisms which lack either or both of asparaginyl-tRNA or glutaminyl-tRNA synthetases. The reaction takes place in the presence of glutamine and ATP through an activated phospho-Asp-tRNA(Asn) or phospho-Glu-tRNA(Gln). This Corynebacterium efficiens (strain DSM 44549 / YS-314 / AJ 12310 / JCM 11189 / NBRC 100395) protein is Aspartyl/glutamyl-tRNA(Asn/Gln) amidotransferase subunit C.